Reading from the N-terminus, the 735-residue chain is Ribosomal protein S6 kinase alpha-1 (735 aa).

The residue at position 54 (Ser-54) is a Phosphoserine. One can recognise a Protein kinase 1 domain in the interval 62–321 (FELLKVLGQG…AEEIKRHIFY (260 aa)). Residues 68-76 (LGQGSFGKV) and Lys-94 contribute to the ATP site. The active-site Proton acceptor is the Asp-187. Phosphoserine; by PDPK1 is present on Ser-221. Position 307 is a phosphoserine (Ser-307). Residues 322–391 (STIDWNKLYR…VATGLMEDDS (70 aa)) enclose the AGC-kinase C-terminal domain. Thr-359 carries the post-translational modification Phosphothreonine. Ser-363 is subject to Phosphoserine. Residues Ser-369 and Ser-380 each carry the phosphoserine; by autocatalysis modification. In terms of domain architecture, Protein kinase 2 spans 418 to 675 (YIVKETIGVG…AKQVLQHPWI (258 aa)). ATP is bound by residues 424–432 (IGVGSYSVC) and Lys-447. Asp-535 acts as the Proton acceptor in catalysis. Position 573 is a phosphothreonine (Thr-573). Ser-732 is modified (phosphoserine).

Belongs to the protein kinase superfamily. AGC Ser/Thr protein kinase family. S6 kinase subfamily. As to quaternary structure, forms a complex with either MAPK1/ERK2 or MAPK3/ERK1 in quiescent cells. Transiently dissociates following mitogenic stimulation. Interacts with ETV1/ER81 and FGFR1. It depends on Mg(2+) as a cofactor. Activated by phosphorylation at Ser-221 by PDPK1. Autophosphorylated on Ser-380, as part of the activation process. May be phosphorylated at Thr-359 and Ser-363 by MAPK1/ERK2 and MAPK3/ERK1. In terms of processing, N-terminal myristoylation results in an activated kinase in the absence of added growth factors.

Its subcellular location is the nucleus. The protein resides in the cytoplasm. The enzyme catalyses L-seryl-[protein] + ATP = O-phospho-L-seryl-[protein] + ADP + H(+). It carries out the reaction L-threonyl-[protein] + ATP = O-phospho-L-threonyl-[protein] + ADP + H(+). With respect to regulation, upon extracellular signal or mitogen stimulation, phosphorylated at Thr-573 in the C-terminal kinase domain (CTKD) by MAPK1/ERK2 and MAPK3/ERK1. The activated CTKD then autophosphorylates Ser-380, allowing binding of PDPK1, which in turn phosphorylates Ser-221 in the N-terminal kinase domain (NTDK) leading to the full activation of the protein and subsequent phosphorylation of the substrates by the NTKD. Its function is as follows. Serine/threonine-protein kinase that acts downstream of ERK (MAPK1/ERK2 and MAPK3/ERK1) signaling and mediates mitogenic and stress-induced activation of the transcription factors CREB1, ETV1/ER81 and NR4A1/NUR77, regulates translation through RPS6 and EIF4B phosphorylation, and mediates cellular proliferation, survival, and differentiation by modulating mTOR signaling and repressing pro-apoptotic function of BAD and DAPK1. In fibroblast, is required for EGF-stimulated phosphorylation of CREB1, which results in the subsequent transcriptional activation of several immediate-early genes. In response to mitogenic stimulation (EGF and PMA), phosphorylates and activates NR4A1/NUR77 and ETV1/ER81 transcription factors and the cofactor CREBBP. Upon insulin-derived signal, acts indirectly on the transcription regulation of several genes by phosphorylating GSK3B at 'Ser-9' and inhibiting its activity. Phosphorylates RPS6 in response to serum or EGF via an mTOR-independent mechanism and promotes translation initiation by facilitating assembly of the pre-initiation complex. In response to insulin, phosphorylates EIF4B, enhancing EIF4B affinity for the EIF3 complex and stimulating cap-dependent translation. Is involved in the mTOR nutrient-sensing pathway by directly phosphorylating TSC2 at 'Ser-1798', which potently inhibits TSC2 ability to suppress mTOR signaling, and mediates phosphorylation of RPTOR, which regulates mTORC1 activity and may promote rapamycin-sensitive signaling independently of the PI3K/AKT pathway. Also involved in feedback regulation of mTORC1 and mTORC2 by phosphorylating DEPTOR. Mediates cell survival by phosphorylating the pro-apoptotic proteins BAD and DAPK1 and suppressing their pro-apoptotic function. Promotes the survival of hepatic stellate cells by phosphorylating CEBPB in response to the hepatotoxin carbon tetrachloride (CCl4). Mediates induction of hepatocyte prolifration by TGFA through phosphorylation of CEBPB. Is involved in cell cycle regulation by phosphorylating the CDK inhibitor CDKN1B, which promotes CDKN1B association with 14-3-3 proteins and prevents its translocation to the nucleus and inhibition of G1 progression. Phosphorylates EPHA2 at 'Ser-897', the RPS6KA-EPHA2 signaling pathway controls cell migration. In response to mTORC1 activation, phosphorylates EIF4B at 'Ser-406' and 'Ser-422' which stimulates bicarbonate cotransporter SLC4A7 mRNA translation, increasing SLC4A7 protein abundance and function. This Rattus norvegicus (Rat) protein is Ribosomal protein S6 kinase alpha-1 (Rps6ka1).